The chain runs to 305 residues: Catechol 1,2-dioxygenase (305 aa).

Fe cation contacts are provided by Y163, Y197, H221, and H223.

Belongs to the intradiol ring-cleavage dioxygenase family. Homodimer. The cofactor is Fe(3+).

It carries out the reaction catechol + O2 = cis,cis-muconate + 2 H(+). The protein operates within aromatic compound metabolism; beta-ketoadipate pathway; 5-oxo-4,5-dihydro-2-furylacetate from catechol: step 1/3. This Acinetobacter guillouiae (Acinetobacter genomosp. 11) protein is Catechol 1,2-dioxygenase (catA).